We begin with the raw amino-acid sequence, 798 residues long: RNA cytosine-C(5)-methyltransferase NSUN2 (798 aa).

Basic residues predominate over residues Met1 to Gln13. The tract at residues Met1–Ala30 is disordered. A compositionally biased stretch (basic and acidic residues) spans Arg14–Ala30. Residues Cys186 to Lys192, Asp217, Asp244, and Asp270 each bind S-adenosyl-L-methionine. Residue Cys323 is the Nucleophile of the active site. Disordered stretches follow at residues Asp476 to Thr499 and Lys723 to Asp798. Residues Lys723–Ser747 show a composition bias toward basic and acidic residues. Residues Ser751–Val762 show a composition bias toward acidic residues. The span at Ile763–Ala772 shows a compositional bias: basic and acidic residues.

Belongs to the class I-like SAM-binding methyltransferase superfamily. RsmB/NOP family. TRM4 subfamily.

The protein localises to the nucleus. The protein resides in the nucleolus. It is found in the cytoplasm. Its subcellular location is the mitochondrion. It localises to the cytoskeleton. The protein localises to the spindle. The protein resides in the secreted. It is found in the extracellular exosome. It catalyses the reaction cytidine(48) in tRNA + S-adenosyl-L-methionine = 5-methylcytidine(48) in tRNA + S-adenosyl-L-homocysteine + H(+). It carries out the reaction cytidine(49) in tRNA + S-adenosyl-L-methionine = 5-methylcytidine(49) in tRNA + S-adenosyl-L-homocysteine + H(+). The enzyme catalyses cytidine(50) in tRNA + S-adenosyl-L-methionine = 5-methylcytidine(50) in tRNA + S-adenosyl-L-homocysteine + H(+). The catalysed reaction is cytidine(34) in tRNA precursor + S-adenosyl-L-methionine = 5-methylcytidine(34) in tRNA precursor + S-adenosyl-L-homocysteine + H(+). It catalyses the reaction a cytidine in mRNA + S-adenosyl-L-methionine = a 5-methylcytidine in mRNA + S-adenosyl-L-homocysteine + H(+). Its function is as follows. RNA cytosine C(5)-methyltransferase that methylates cytosine to 5-methylcytosine (m5C) in various RNAs, such as tRNAs, mRNAs and some long non-coding RNAs (lncRNAs). Involved in various processes, such as epidermal stem cell differentiation, testis differentiation and maternal to zygotic transition during early development: acts by increasing protein synthesis; cytosine C(5)-methylation promoting tRNA stability and preventing mRNA decay. Methylates cytosine to 5-methylcytosine (m5C) at positions 34 and 48 of intron-containing tRNA(Leu)(CAA) precursors, and at positions 48, 49 and 50 of tRNA(Gly)(GCC) precursors. tRNA methylation is required generation of RNA fragments derived from tRNAs (tRFs). Also mediates C(5)-methylation of mitochondrial tRNAs. Catalyzes cytosine C(5)-methylation of mRNAs, leading to stabilize them and prevent mRNA decay. Cytosine C(5)-methylation of mRNAs also regulates mRNA export. Also mediates cytosine C(5)-methylation of non-coding RNAs, such as vault RNAs (vtRNAs), promoting their processing into regulatory small RNAs. Required for proper spindle assembly and chromosome segregation, independently of its methyltransferase activity. The polypeptide is RNA cytosine-C(5)-methyltransferase NSUN2 (Xenopus tropicalis (Western clawed frog)).